The primary structure comprises 161 residues: Allophycocyanin beta chain (161 aa).

Asn71 carries the post-translational modification N4-methylasparagine. Cys81 is a binding site for (2R,3E)-phycocyanobilin.

Belongs to the phycobiliprotein family. In terms of assembly, heterodimer of an alpha and a beta chain. Post-translationally, contains one covalently linked phycocyanobilin chromophore.

The protein resides in the cellular thylakoid membrane. Its function is as follows. Light-harvesting photosynthetic bile pigment-protein from the phycobiliprotein complex. Allophycocyanin has a maximum absorption at approximately 650 nanometers. This is Allophycocyanin beta chain (apcB) from Anabaena cylindrica.